A 539-amino-acid polypeptide reads, in one-letter code: GMP synthase [glutamine-hydrolyzing] (539 aa).

The region spanning lysine 4–aspartate 203 is the Glutamine amidotransferase type-1 domain. Cysteine 82 (nucleophile) is an active-site residue. Residues histidine 177 and glutamate 179 contribute to the active site. Residues tryptophan 204 to arginine 395 enclose the GMPS ATP-PPase domain. ATP is bound at residue serine 231 to serine 237.

In terms of assembly, homodimer.

It carries out the reaction XMP + L-glutamine + ATP + H2O = GMP + L-glutamate + AMP + diphosphate + 2 H(+). It participates in purine metabolism; GMP biosynthesis; GMP from XMP (L-Gln route): step 1/1. In terms of biological role, catalyzes the synthesis of GMP from XMP. This chain is GMP synthase [glutamine-hydrolyzing], found in Janthinobacterium sp. (strain Marseille) (Minibacterium massiliensis).